The sequence spans 500 residues: Metacaspase-5 (500 aa).

Residues 1–18 form the signal peptide; that stretch reads MDAALALLFGQVATAVLP. The segment at 19 to 63 is important for catalytic activity; the sequence is YVVNSIGRVPRPKRVDVKKAMGEAHQCRPVVPYRAPRPYTEGRVK. 2 N-linked (GlcNAc...) asparagine glycosylation sites follow: Asn-70 and Asn-113. His-147 is a catalytic residue. The Ca(2+) site is built by Asp-162, Asp-178, and Asp-179. Residue Cys-202 is part of the active site. Asp-209 is a Ca(2+) binding site. 6 N-linked (GlcNAc...) asparagine glycosylation sites follow: Asn-219, Asn-235, Asn-258, Asn-264, Asn-283, and Asn-332. Disordered regions lie at residues 358 to 419 and 444 to 500; these read EATL…QAYY and QPPQ…PGRK. Residues 379-389 show a composition bias toward polar residues; the sequence is ASTSNGKSNPG. Residues 444-461 are compositionally biased toward low complexity; the sequence is QPPQQAYYQPPQQAYYQP.

Belongs to the peptidase C14B family.

The protein resides in the recycling endosome. Cysteine protease that cleaves specifically after arginine or lysine residues. This chain is Metacaspase-5, found in Trypanosoma brucei brucei.